Here is a 179-residue protein sequence, read N- to C-terminus: Guanosine-3',5'-bis(diphosphate) 3'-pyrophosphohydrolase MESH1 (179 aa).

At G2 the chain carries N-acetylglycine. K25 is subject to N6-acetyllysine. Positions 32–127 constitute an HD domain; that stretch reads YINHPIGVAR…VKLADKLYNL (96 aa). Residues H35, H61, and D62 each coordinate Mn(2+). Residues E65 and D66 each act as nucleophile in the active site. N6-acetyllysine is present on K97. D122 is a binding site for Mn(2+). K123 carries the N6-acetyllysine modification.

Belongs to the MESH1 family. Mn(2+) is required as a cofactor.

The enzyme catalyses guanosine 3',5'-bis(diphosphate) + H2O = GDP + diphosphate + H(+). PpGpp hydrolyzing enzyme involved in starvation response. The sequence is that of Guanosine-3',5'-bis(diphosphate) 3'-pyrophosphohydrolase MESH1 (HDDC3) from Homo sapiens (Human).